The sequence spans 200 residues: Small ribosomal subunit protein uS4c (200 aa).

The region spanning 91 to 154 (MRLDNVVFRL…NSRKMVTEAN (64 aa)) is the S4 RNA-binding domain.

Belongs to the universal ribosomal protein uS4 family. Part of the 30S ribosomal subunit. Contacts protein S5. The interaction surface between S4 and S5 is involved in control of translational fidelity.

It localises to the plastid. Its subcellular location is the chloroplast. Functionally, one of the primary rRNA binding proteins, it binds directly to 16S rRNA where it nucleates assembly of the body of the 30S subunit. With S5 and S12 plays an important role in translational accuracy. This chain is Small ribosomal subunit protein uS4c (rps4), found in Oltmannsiellopsis viridis (Marine flagellate).